A 698-amino-acid chain; its full sequence is 4-hydroxybutyrate--CoA ligase [ADP-forming] (698 aa).

Residues 491–544 form the ATP-grasp domain; sequence QEVLKAYGLPLPKSTLAKNEAEAVKAAKKIGYPVVMKIASPQIIHKSDAGGVKV. 517–544 lines the ATP pocket; it reads AKKIGYPVVMKIASPQIIHKSDAGGVKV.

In the N-terminal section; belongs to the acetate CoA ligase alpha subunit family. The protein in the C-terminal section; belongs to the acetate CoA ligase beta subunit family. It depends on Mg(2+) as a cofactor. Mn(2+) serves as cofactor.

It catalyses the reaction 4-hydroxybutanoate + ATP + CoA = 4-hydroxybutanoyl-CoA + ADP + phosphate. In terms of biological role, involved in thaumarchaeal hydroxypropionate/hydroxybutyrate (HP/HB) cycle, a modified version of the autotrophic HP/HB cycle of Crenarchaeota. Catalyzes the formation of 4-hydroxybutyryl-CoA, ADP and phosphate from 4-hydroxybutyrate, coenzyme A (CoA) and ATP. Can also use acetate, propionate and butyrate, with poor catalytic efficiency. The sequence is that of 4-hydroxybutyrate--CoA ligase [ADP-forming] from Nitrosopumilus maritimus (strain SCM1).